We begin with the raw amino-acid sequence, 527 residues long: EGF domain-specific O-linked N-acetylglucosamine transferase (527 aa).

An N-terminal signal peptide occupies residues 1–17 (MFMLLVFGALLPEVPLS). A Required for optimal activity motif is present at residues 295–297 (DYD). Asn-354 carries an N-linked (GlcNAc...) asparagine glycan. Positions 524–527 (HDEL) match the Prevents secretion from ER motif.

Belongs to the glycosyltransferase 61 family.

It localises to the endoplasmic reticulum lumen. The enzyme catalyses L-seryl-[protein] + UDP-N-acetyl-alpha-D-glucosamine = 3-O-(N-acetyl-beta-D-glucosaminyl)-L-seryl-[protein] + UDP + H(+). The catalysed reaction is L-threonyl-[protein] + UDP-N-acetyl-alpha-D-glucosamine = 3-O-(N-acetyl-beta-D-glucosaminyl)-L-threonyl-[protein] + UDP + H(+). Functionally, catalyzes the transfer of a single N-acetylglucosamine from UDP-GlcNAc to a serine or threonine residue in extracellular proteins resulting in their modification with a beta-linked N-acetylglucosamine (O-GlcNAc). Specifically glycosylates the Thr residue located between the fifth and sixth conserved cysteines of folded EGF-like domains. This is EGF domain-specific O-linked N-acetylglucosamine transferase (EOGT) from Bos taurus (Bovine).